The primary structure comprises 135 residues: Transcription antitermination protein NusB (135 aa).

Belongs to the NusB family.

Involved in transcription antitermination. Required for transcription of ribosomal RNA (rRNA) genes. Binds specifically to the boxA antiterminator sequence of the ribosomal RNA (rrn) operons. The protein is Transcription antitermination protein NusB of Clostridium acetobutylicum (strain ATCC 824 / DSM 792 / JCM 1419 / IAM 19013 / LMG 5710 / NBRC 13948 / NRRL B-527 / VKM B-1787 / 2291 / W).